A 212-amino-acid polypeptide reads, in one-letter code: Fucoxanthin-chlorophyll a-c binding protein E, chloroplastic (212 aa).

Residues 1–34 (MAIACAAAPGLRGAEPFNGAALATSAKSSSAMKM) constitute a chloroplast transit peptide. A run of 3 helical transmembrane segments spans residues 76–96 (IAML…PGML), 117–137 (IPPL…LFVV), and 178–198 (GRAA…SNQP).

This sequence belongs to the fucoxanthin chlorophyll protein family. The LHC complex of chromophytic algae is composed of fucoxanthin, chlorophyll A and C bound non-covalently by fucoxanthin chlorophyll proteins (FCPs). The ratio of pigments in this LHC is; fucoxanthin: chlorophyll C: chlorophyll A; (0.6-1): (0.1-0.3): (1).

The protein localises to the plastid. It localises to the chloroplast thylakoid membrane. In terms of biological role, the light-harvesting complex (LHC) functions as a light receptor, it captures and delivers excitation energy to photosystems with which it is closely associated. Energy is transferred from the carotenoid and chlorophyll C (or B) to chlorophyll A and the photosynthetic reaction centers where it is used to synthesize ATP and reducing power. The polypeptide is Fucoxanthin-chlorophyll a-c binding protein E, chloroplastic (FCPE) (Macrocystis pyrifera (Giant kelp)).